A 293-amino-acid chain; its full sequence is Elongation factor Ts (293 aa).

The segment at 79–82 is involved in Mg(2+) ion dislocation from EF-Tu; it reads TDFV.

The protein belongs to the EF-Ts family.

The protein resides in the cytoplasm. Its function is as follows. Associates with the EF-Tu.GDP complex and induces the exchange of GDP to GTP. It remains bound to the aminoacyl-tRNA.EF-Tu.GTP complex up to the GTP hydrolysis stage on the ribosome. The chain is Elongation factor Ts from Bacillus velezensis (strain DSM 23117 / BGSC 10A6 / LMG 26770 / FZB42) (Bacillus amyloliquefaciens subsp. plantarum).